A 118-amino-acid chain; its full sequence is Large ribosomal subunit protein bL19 (118 aa).

Belongs to the bacterial ribosomal protein bL19 family.

In terms of biological role, this protein is located at the 30S-50S ribosomal subunit interface and may play a role in the structure and function of the aminoacyl-tRNA binding site. The chain is Large ribosomal subunit protein bL19 from Herpetosiphon aurantiacus (strain ATCC 23779 / DSM 785 / 114-95).